Consider the following 100-residue polypeptide: Large ribosomal subunit protein bL21 (100 aa).

Belongs to the bacterial ribosomal protein bL21 family. Part of the 50S ribosomal subunit. Contacts protein L20.

Functionally, this protein binds to 23S rRNA in the presence of protein L20. This Rhodospirillum rubrum (strain ATCC 11170 / ATH 1.1.1 / DSM 467 / LMG 4362 / NCIMB 8255 / S1) protein is Large ribosomal subunit protein bL21.